A 291-amino-acid chain; its full sequence is Probable 2-(5''-triphosphoribosyl)-3'-dephosphocoenzyme-A synthase (291 aa).

It belongs to the CitG/MdcB family.

The enzyme catalyses 3'-dephospho-CoA + ATP = 2'-(5''-triphospho-alpha-D-ribosyl)-3'-dephospho-CoA + adenine. Involved in the formation of 2-(5''-phosphoribosyl)-3'-dephosphocoenzyme-A, the prosthetic group of the acyl-carrier protein of the malonate decarboxylase. This is Probable 2-(5''-triphosphoribosyl)-3'-dephosphocoenzyme-A synthase from Pseudomonas syringae pv. tomato (strain ATCC BAA-871 / DC3000).